Reading from the N-terminus, the 338-residue chain is Ketol-acid reductoisomerase (NADP(+)) (338 aa).

The 181-residue stretch at 1 to 181 folds into the KARI N-terminal Rossmann domain; sequence MKVYYDKDAD…GGTKGGVIET (181 aa). Residues 24–27, arginine 47, and serine 52 each bind NADP(+); that span reads YGSQ. Residue histidine 107 is part of the active site. Residue glycine 133 coordinates NADP(+). A KARI C-terminal knotted domain is found at 182-327; it reads NFREETETDL…GQLRDMMPWI (146 aa). Mg(2+) contacts are provided by aspartate 190, glutamate 194, glutamate 226, and glutamate 230. Serine 251 is a substrate binding site.

The protein belongs to the ketol-acid reductoisomerase family. Requires Mg(2+) as cofactor.

The catalysed reaction is (2R)-2,3-dihydroxy-3-methylbutanoate + NADP(+) = (2S)-2-acetolactate + NADPH + H(+). It carries out the reaction (2R,3R)-2,3-dihydroxy-3-methylpentanoate + NADP(+) = (S)-2-ethyl-2-hydroxy-3-oxobutanoate + NADPH + H(+). Its pathway is amino-acid biosynthesis; L-isoleucine biosynthesis; L-isoleucine from 2-oxobutanoate: step 2/4. The protein operates within amino-acid biosynthesis; L-valine biosynthesis; L-valine from pyruvate: step 2/4. In terms of biological role, involved in the biosynthesis of branched-chain amino acids (BCAA). Catalyzes an alkyl-migration followed by a ketol-acid reduction of (S)-2-acetolactate (S2AL) to yield (R)-2,3-dihydroxy-isovalerate. In the isomerase reaction, S2AL is rearranged via a Mg-dependent methyl migration to produce 3-hydroxy-3-methyl-2-ketobutyrate (HMKB). In the reductase reaction, this 2-ketoacid undergoes a metal-dependent reduction by NADPH to yield (R)-2,3-dihydroxy-isovalerate. The polypeptide is Ketol-acid reductoisomerase (NADP(+)) (Aromatoleum aromaticum (strain DSM 19018 / LMG 30748 / EbN1) (Azoarcus sp. (strain EbN1))).